The sequence spans 404 residues: Indole-3-acetate O-methyltransferase 1 (404 aa).

S-adenosyl-L-methionine is bound by residues 82–83 (GC), Asn88, Asp120, 169–171 (TFY), and 186–188 (TFS). Asn208, Val212, Arg294, Asp295, Phe297, and Asn298 together coordinate Mg(2+).

The protein belongs to the methyltransferase superfamily. SABATH family. Homodimer. It depends on Mg(2+) as a cofactor. In terms of tissue distribution, expressed in roots and panicles.

The enzyme catalyses (indol-3-yl)acetate + S-adenosyl-L-methionine = methyl (indol-3-yl)acetate + S-adenosyl-L-homocysteine. Functionally, catalyzes the methylation of the free carboxyl end of the plant hormone indole-3-acetic acid (IAA). Converts IAA to IAA methyl ester (MeIAA). Regulates IAA activities by IAA methylation. Methylation of IAA plays an important role in regulating plant development and auxin homeostasis. MeIAA seems to be an inactive form of IAA. The sequence is that of Indole-3-acetate O-methyltransferase 1 (IAMT1) from Oryza sativa subsp. japonica (Rice).